The sequence spans 1177 residues: DNA-directed RNA polymerase subunit beta' (1177 aa).

The Zn(2+) site is built by C60, C62, C75, and C78. 3 residues coordinate Mg(2+): D450, D452, and D454. The Zn(2+) site is built by C795, C869, C876, and C879.

This sequence belongs to the RNA polymerase beta' chain family. As to quaternary structure, the RNAP catalytic core consists of 2 alpha, 1 beta, 1 beta' and 1 omega subunit. When a sigma factor is associated with the core the holoenzyme is formed, which can initiate transcription. Mg(2+) is required as a cofactor. It depends on Zn(2+) as a cofactor.

It carries out the reaction RNA(n) + a ribonucleoside 5'-triphosphate = RNA(n+1) + diphosphate. DNA-dependent RNA polymerase catalyzes the transcription of DNA into RNA using the four ribonucleoside triphosphates as substrates. This is DNA-directed RNA polymerase subunit beta' from Clostridium botulinum (strain Alaska E43 / Type E3).